We begin with the raw amino-acid sequence, 273 residues long: Aliphatic sulfonates import ATP-binding protein SsuB 2 (273 aa).

Residues 17–241 form the ABC transporter domain; the sequence is LLDLRITRKL…PRDRRDPTLA (225 aa). 50–57 contacts ATP; the sequence is GPSGCGKS.

Belongs to the ABC transporter superfamily. Aliphatic sulfonates importer (TC 3.A.1.17.2) family. As to quaternary structure, the complex is composed of two ATP-binding proteins (SsuB), two transmembrane proteins (SsuC) and a solute-binding protein (SsuA).

The protein resides in the cell inner membrane. It carries out the reaction ATP + H2O + aliphatic sulfonate-[sulfonate-binding protein]Side 1 = ADP + phosphate + aliphatic sulfonateSide 2 + [sulfonate-binding protein]Side 1.. Its function is as follows. Part of the ABC transporter complex SsuABC involved in aliphatic sulfonates import. Responsible for energy coupling to the transport system. The polypeptide is Aliphatic sulfonates import ATP-binding protein SsuB 2 (Burkholderia lata (strain ATCC 17760 / DSM 23089 / LMG 22485 / NCIMB 9086 / R18194 / 383)).